A 149-amino-acid polypeptide reads, in one-letter code: Large ribosomal subunit protein bL17 (149 aa).

This sequence belongs to the bacterial ribosomal protein bL17 family. Part of the 50S ribosomal subunit. Contacts protein L32.

This is Large ribosomal subunit protein bL17 from Kosmotoga olearia (strain ATCC BAA-1733 / DSM 21960 / TBF 19.5.1).